We begin with the raw amino-acid sequence, 613 residues long: Autophagy-related protein 22-2 (613 aa).

The disordered stretch occupies residues 1-30 (MAFNSTPPVSPGGEAQQRPPRFPGEDTTPT). The helical transmembrane segment at 41–61 (YGIAAEVFAVCGVGSFLPLTL) threads the bilayer. N-linked (GlcNAc...) asparagine glycosylation is present at asparagine 90. 7 helical membrane passes run 120–140 (SFAM…LISF), 167–187 (LFIF…VVGV), 189–209 (CLGS…ANDP), 278–298 (VGLG…MLFA), 307–327 (ISGT…WFSF), 382–402 (VIIF…VSGT), and 418–438 (VGLL…LWPV). The N-linked (GlcNAc...) asparagine glycan is linked to asparagine 448. 4 consecutive transmembrane segments (helical) span residues 453–473 (LCIA…IPLF), 477–497 (GVVG…HGLV), 508–528 (FFGL…YAAT), and 553–573 (GFFF…MVNA). The disordered stretch occupies residues 592 to 613 (REHASEYGGPSEEAEGLLARDI).

Belongs to the ATG22 family.

It localises to the vacuole membrane. In terms of biological role, vacuolar effluxer which mediate the efflux of amino acids resulting from autophagic degradation. The release of autophagic amino acids allows the maintenance of protein synthesis and viability during nitrogen starvation. This Aspergillus fumigatus (strain ATCC MYA-4609 / CBS 101355 / FGSC A1100 / Af293) (Neosartorya fumigata) protein is Autophagy-related protein 22-2 (atg22-2).